Consider the following 236-residue polypeptide: Ribose-5-phosphate isomerase A (236 aa).

Substrate is bound by residues 28-31 (TGST), 83-86 (DGAD), and 96-99 (KGGG). Glu-105 functions as the Proton acceptor in the catalytic mechanism. Lys-123 is a binding site for substrate.

Belongs to the ribose 5-phosphate isomerase family. As to quaternary structure, homodimer.

The catalysed reaction is aldehydo-D-ribose 5-phosphate = D-ribulose 5-phosphate. The protein operates within carbohydrate degradation; pentose phosphate pathway; D-ribose 5-phosphate from D-ribulose 5-phosphate (non-oxidative stage): step 1/1. Catalyzes the reversible conversion of ribose-5-phosphate to ribulose 5-phosphate. The sequence is that of Ribose-5-phosphate isomerase A from Methylorubrum extorquens (strain CM4 / NCIMB 13688) (Methylobacterium extorquens).